The primary structure comprises 116 residues: MRALITFALLCLLYITVQGKVSTPKVHVYSHFPGEYGKPNTLICYVSSFHPPDISIELLKNGQVMSDTKQTDLAFEKGWQFHLTKSVAFTPEKGDEYTCSVRHMKETKKFSWEPNM.

Residues 1-19 form the signal peptide; it reads MRALITFALLCLLYITVQG. In terms of domain architecture, Ig-like C1-type spans 24 to 111; sequence PKVHVYSHFP…RHMKETKKFS (88 aa). Cys-44 and Cys-99 are joined by a disulfide.

The protein belongs to the beta-2-microglobulin family. In terms of assembly, heterodimer of an alpha chain and a beta chain. Beta-2-microglobulin is the beta-chain of major histocompatibility complex class I molecules.

The protein localises to the secreted. Component of the class I major histocompatibility complex (MHC). Involved in the presentation of peptide antigens to the immune system. In Danio rerio (Zebrafish), this protein is Beta-2-microglobulin (b2m).